Reading from the N-terminus, the 355-residue chain is Ribosomal RNA large subunit methyltransferase M (355 aa).

Residues Ser-191, 224 to 227 (APGG), Asp-243, Asp-263, and Asp-279 contribute to the S-adenosyl-L-methionine site. The active-site Proton acceptor is Lys-308.

The protein belongs to the class I-like SAM-binding methyltransferase superfamily. RNA methyltransferase RlmE family. RlmM subfamily. Monomer.

It is found in the cytoplasm. It catalyses the reaction cytidine(2498) in 23S rRNA + S-adenosyl-L-methionine = 2'-O-methylcytidine(2498) in 23S rRNA + S-adenosyl-L-homocysteine + H(+). Catalyzes the 2'-O-methylation at nucleotide C2498 in 23S rRNA. In Stenotrophomonas maltophilia (strain R551-3), this protein is Ribosomal RNA large subunit methyltransferase M.